The primary structure comprises 287 residues: tRNA N(3)-cytidine methyltransferase METTL6 (287 aa).

Residues W45, Y49, G87, D110, D136, L137, and I157 each contribute to the S-adenosyl-L-methionine site. The segment at 267 to 287 (RKPPKDPAPTTDSASLLRKEF) is disordered.

Belongs to the methyltransferase superfamily. METL family. Monomer. Interacts with SARS1/SerRS; interaction is mediated via tRNA(Ser) and is required for N(3)-methylcytidine methylation.

Its subcellular location is the cytoplasm. It is found in the nucleus. It carries out the reaction cytidine(32) in tRNA(Ser) + S-adenosyl-L-methionine = N(3)-methylcytidine(32) in tRNA(Ser) + S-adenosyl-L-homocysteine + H(+). Its function is as follows. S-adenosyl-L-methionine-dependent methyltransferase that mediates N(3)-methylcytidine modification of residue 32 of the tRNA anticodon loop of tRNA(Ser), including tRNA(Ser)(UGA) and tRNA(Ser)(GCU). Interaction with SARS1/SerRS is required for N(3)-methylcytidine methylation. The polypeptide is tRNA N(3)-cytidine methyltransferase METTL6 (Mettl6) (Rattus norvegicus (Rat)).